We begin with the raw amino-acid sequence, 302 residues long: Bifunctional protein FolD (302 aa).

Residues 165 to 167 (GRS), S190, and I231 each bind NADP(+).

It belongs to the tetrahydrofolate dehydrogenase/cyclohydrolase family. In terms of assembly, homodimer.

The catalysed reaction is (6R)-5,10-methylene-5,6,7,8-tetrahydrofolate + NADP(+) = (6R)-5,10-methenyltetrahydrofolate + NADPH. It carries out the reaction (6R)-5,10-methenyltetrahydrofolate + H2O = (6R)-10-formyltetrahydrofolate + H(+). It participates in one-carbon metabolism; tetrahydrofolate interconversion. In terms of biological role, catalyzes the oxidation of 5,10-methylenetetrahydrofolate to 5,10-methenyltetrahydrofolate and then the hydrolysis of 5,10-methenyltetrahydrofolate to 10-formyltetrahydrofolate. This is Bifunctional protein FolD from Prochlorococcus marinus (strain MIT 9211).